The chain runs to 162 residues: MASLTHIDAEGSARMVDVSDKAATTREALAEGRVAMAPATLELILSGNAKKGDVMGVARLAGIMAAKRTHELIPLCHPLMLTKVEVEVVPDSALPGLHVTARAKTTGQTGVEMEALTAVSVACLTIYDMAKAADRGMRIEGIRLLEKSGGASGHFRAEPPTD.

Substrate is bound by residues 75–77 (LCH) and 113–114 (ME). Residue Asp-128 is part of the active site.

It belongs to the MoaC family. In terms of assembly, homohexamer; trimer of dimers.

The enzyme catalyses (8S)-3',8-cyclo-7,8-dihydroguanosine 5'-triphosphate = cyclic pyranopterin phosphate + diphosphate. The protein operates within cofactor biosynthesis; molybdopterin biosynthesis. Its function is as follows. Catalyzes the conversion of (8S)-3',8-cyclo-7,8-dihydroguanosine 5'-triphosphate to cyclic pyranopterin monophosphate (cPMP). The sequence is that of Cyclic pyranopterin monophosphate synthase from Xanthobacter autotrophicus (strain ATCC BAA-1158 / Py2).